The following is a 701-amino-acid chain: MSGDKPVEALSEAEAAAELERLARAIADADAAYYQNDAPELTDADYDALRQRNLAIEARFPALKREDSPTDRVGAEAGDGFAKARHSAPMLSLDNAFTDEDVADFAVRIRRFLGLAPEETLAFTAEPKIDGLSLSLTYENGKLMRAATRGDGQTGEDVTANARTLGDIPVKLKGKGWPERIEVRGEVYMAKSAFADLNAREAEAGRKVFANPRNAAAGSLRQLDVEITKSRPLRFFAYAWAAASEPFAQTQFEAVKAFADWGFVTNSRMIRIKTVEEVLSYYQEIEAERASLEYDIDGVVYKVDRLDWQQRLGFVSRAPRWAIAHKFPAEKAVTTLLGIDIQVGRTGSLTPVARLEPVTVGGVVVSNATLHNEDEIARLGVKPGDKVEIQRAGDVIPQVLRVVEPGQGAPWAMPDTCPVCGSAAVREIDDAGRADVRRRCTGGLICPAQAVERLKHFVSRKALDIDGLGEKQVLLFHEKGAVKAPQDIFRLKKNIEAAGLPPLEEWEGFGAQSARKLYSAIDARRKVPFARFLNGLGIRYVGQTTSAQFARSFLSWQSFWAAVKAAEEGGIESEAYNELIGIDGIGQAAARSLMAFEGEPHNREMLAALLEEVEVEDEIPAETGSPVTGKTVVFTGTLEKMTRDEAKARASALGAKVAGTVSAKTDIVIAGPGAGSKLVKAEQLGLAVMTEDEWLALIGET.

NAD(+) is bound by residues 43-47 (DADYD), 92-93 (SL), and Glu126. The active-site N6-AMP-lysine intermediate is the Lys128. NAD(+) contacts are provided by Arg149, Glu186, Lys302, and Lys326. Residues Cys417, Cys420, Cys440, and Cys446 each contribute to the Zn(2+) site. Residues 622-701 (ETGSPVTGKT…DEWLALIGET (80 aa)) enclose the BRCT domain.

The protein belongs to the NAD-dependent DNA ligase family. LigA subfamily. The cofactor is Mg(2+). Mn(2+) is required as a cofactor.

It catalyses the reaction NAD(+) + (deoxyribonucleotide)n-3'-hydroxyl + 5'-phospho-(deoxyribonucleotide)m = (deoxyribonucleotide)n+m + AMP + beta-nicotinamide D-nucleotide.. Its function is as follows. DNA ligase that catalyzes the formation of phosphodiester linkages between 5'-phosphoryl and 3'-hydroxyl groups in double-stranded DNA using NAD as a coenzyme and as the energy source for the reaction. It is essential for DNA replication and repair of damaged DNA. This is DNA ligase from Hyphomonas neptunium (strain ATCC 15444).